Here is a 367-residue protein sequence, read N- to C-terminus: tRNA/tmRNA (uracil-C(5))-methyltransferase (367 aa).

S-adenosyl-L-methionine contacts are provided by Q190, Y218, N223, E239, and D299. The active-site Nucleophile is C324. E358 serves as the catalytic Proton acceptor.

This sequence belongs to the class I-like SAM-binding methyltransferase superfamily. RNA M5U methyltransferase family. TrmA subfamily.

The catalysed reaction is uridine(54) in tRNA + S-adenosyl-L-methionine = 5-methyluridine(54) in tRNA + S-adenosyl-L-homocysteine + H(+). It catalyses the reaction uridine(341) in tmRNA + S-adenosyl-L-methionine = 5-methyluridine(341) in tmRNA + S-adenosyl-L-homocysteine + H(+). Its function is as follows. Dual-specificity methyltransferase that catalyzes the formation of 5-methyluridine at position 54 (m5U54) in all tRNAs, and that of position 341 (m5U341) in tmRNA (transfer-mRNA). This chain is tRNA/tmRNA (uracil-C(5))-methyltransferase, found in Erwinia tasmaniensis (strain DSM 17950 / CFBP 7177 / CIP 109463 / NCPPB 4357 / Et1/99).